A 338-amino-acid polypeptide reads, in one-letter code: GTPase Obg (338 aa).

The 159-residue stretch at 1–159 (MQFIDEVKIH…RWLRLELKLL (159 aa)) folds into the Obg domain. An OBG-type G domain is found at 160–331 (ADVGLLGFPN…LLDEIARSLW (172 aa)). Residues 166 to 173 (GFPNVGKS), 191 to 195 (FTTLK), 213 to 216 (DIPG), 283 to 286 (NKMD), and 312 to 314 (SAA) contribute to the GTP site. Mg(2+) is bound by residues serine 173 and threonine 193.

Belongs to the TRAFAC class OBG-HflX-like GTPase superfamily. OBG GTPase family. In terms of assembly, monomer. It depends on Mg(2+) as a cofactor.

The protein resides in the cytoplasm. Its function is as follows. An essential GTPase which binds GTP, GDP and possibly (p)ppGpp with moderate affinity, with high nucleotide exchange rates and a fairly low GTP hydrolysis rate. Plays a role in control of the cell cycle, stress response, ribosome biogenesis and in those bacteria that undergo differentiation, in morphogenesis control. The sequence is that of GTPase Obg from Geobacter sulfurreducens (strain ATCC 51573 / DSM 12127 / PCA).